The chain runs to 817 residues: Transcription factor yanR (817 aa).

The zn(2)-C6 fungal-type DNA-binding region spans C19–C46. 3 disordered regions span residues G102–D161, H180–L218, and S733–S775. The span at L113–Q127 shows a compositional bias: pro residues. Residues S146–P158 are compositionally biased toward polar residues. Residues S184–S195 are compositionally biased toward low complexity. Composition is skewed to polar residues over residues A208–G217 and E748–S760.

Its subcellular location is the nucleus. Its function is as follows. Transcription factor that regulates the expression of the gene cluster that mediates the biosynthesis of yanuthone D, a fungal isoprenoid epoxycyclohexenone that acts as an antibiotic against fungi and bacteria. This is Transcription factor yanR from Aspergillus niger (strain ATCC 1015 / CBS 113.46 / FGSC A1144 / LSHB Ac4 / NCTC 3858a / NRRL 328 / USDA 3528.7).